Here is a 259-residue protein sequence, read N- to C-terminus: GTP cyclohydrolase FolE2 (259 aa).

The protein belongs to the GTP cyclohydrolase IV family.

It carries out the reaction GTP + H2O = 7,8-dihydroneopterin 3'-triphosphate + formate + H(+). The protein operates within cofactor biosynthesis; 7,8-dihydroneopterin triphosphate biosynthesis; 7,8-dihydroneopterin triphosphate from GTP: step 1/1. Its function is as follows. Converts GTP to 7,8-dihydroneopterin triphosphate. This is GTP cyclohydrolase FolE2 from Thermosipho africanus (strain TCF52B).